Here is a 62-residue protein sequence, read N- to C-terminus: Venom peptide 6 (62 aa).

A signal peptide spans 1-26 (MKSTSVFILFAGIAIMACLQMTGTEA). AXPX repeat units follow at residues 26–29 (AAPS), 30–33 (ASPN), and 40–43 (ADPD). A propeptide spanning residues 27–46 (APSASPNPTPVARADPDPEA) is cleaved from the precursor.

It belongs to the MCD family. In terms of tissue distribution, expressed by the venom gland.

The protein localises to the secreted. Its subcellular location is the target cell membrane. In terms of biological role, antimicrobial peptide with strong activity against the fungus B.cinerea (MIC=5 uM) and the Gram-positive bacterium S.aureus (MIC=50 uM), and no activity against C.albicans (MIC&gt;200 uM), and the Gram-negative bacterium E.coli (MIC&gt;200 uM). Shows cytolytic activity against insect cell lines. Has no hemolytic activity against human erythrocytes. In vivo, peptide injection in the vicinity of the head and thorax of lepidopteran larvae induces feeding disorder that lasts one or two days before recovering. This Eumenes pomiformis (Potter wasp) protein is Venom peptide 6.